The following is an 88-amino-acid chain: Small ribosomal subunit protein bS20 (88 aa).

The segment at 1–27 is disordered; sequence MANIPSAKKRARQAEKRRKHNQSQRSM. Basic residues predominate over residues 7-22; sequence AKKRARQAEKRRKHNQ.

This sequence belongs to the bacterial ribosomal protein bS20 family.

In terms of biological role, binds directly to 16S ribosomal RNA. The polypeptide is Small ribosomal subunit protein bS20 (Alkalilimnicola ehrlichii (strain ATCC BAA-1101 / DSM 17681 / MLHE-1)).